A 235-amino-acid polypeptide reads, in one-letter code: BPI fold-containing family A member 2 (235 aa).

Residues Met-1 to Ser-20 form the signal peptide. Residues Cys-161 and Cys-204 are joined by a disulfide bond.

Belongs to the BPI/LBP/Plunc superfamily. Plunc family. In terms of tissue distribution, predominates in the parotid glands, present in smaller amounts (1/10) in the submaxillary glands and in the sublingual glands, and at lower amount in the pancreas but undetectable in the liver. Found also in lacrimal gland.

The protein localises to the secreted. Functionally, has strong antibacterial activity against P.aeruginosa. The chain is BPI fold-containing family A member 2 (Bpifa2) from Mus musculus (Mouse).